The sequence spans 546 residues: Chaperonin GroEL 3 (546 aa).

ATP is bound by residues 30 to 33 (TLGP), lysine 51, 87 to 91 (DGTTT), glycine 415, and aspartate 496.

Belongs to the chaperonin (HSP60) family. In terms of assembly, forms a cylinder of 14 subunits composed of two heptameric rings stacked back-to-back. Interacts with the co-chaperonin GroES.

The protein localises to the cytoplasm. The catalysed reaction is ATP + H2O + a folded polypeptide = ADP + phosphate + an unfolded polypeptide.. Together with its co-chaperonin GroES, plays an essential role in assisting protein folding. The GroEL-GroES system forms a nano-cage that allows encapsulation of the non-native substrate proteins and provides a physical environment optimized to promote and accelerate protein folding. The protein is Chaperonin GroEL 3 of Bradyrhizobium diazoefficiens (strain JCM 10833 / BCRC 13528 / IAM 13628 / NBRC 14792 / USDA 110).